Here is a 398-residue protein sequence, read N- to C-terminus: Phosphoglycerate kinase (398 aa).

Substrate is bound by residues 21 to 23 (DFN), Arg36, 59 to 62 (HLGR), Arg119, and Arg157. ATP is bound by residues Lys208, Gly296, Glu327, and 354–357 (GGDS).

The protein belongs to the phosphoglycerate kinase family. Monomer.

The protein localises to the cytoplasm. The enzyme catalyses (2R)-3-phosphoglycerate + ATP = (2R)-3-phospho-glyceroyl phosphate + ADP. Its pathway is carbohydrate degradation; glycolysis; pyruvate from D-glyceraldehyde 3-phosphate: step 2/5. This chain is Phosphoglycerate kinase, found in Streptococcus agalactiae serotype Ia (strain ATCC 27591 / A909 / CDC SS700).